The sequence spans 707 residues: 65-kDa microtubule-associated protein 3 (707 aa).

Coiled coils occupy residues 49–84, 157–179, 269–289, 354–374, and 464–486; these read LEVY…CSAM, NLSM…EKID, QQEY…ITEA, IVDA…IKEE, and LEEY…DQKK. The tract at residues 495-574 is disordered; it reads QEALYGSKPS…PSRKQSMNPS (80 aa). The span at 500 to 512 shows a compositional bias: low complexity; the sequence is GSKPSPSKPLGGK. Residues Ser504 and Ser528 each carry the phosphoserine modification.

The protein belongs to the MAP65/ASE1 family. In terms of assembly, forms a dimer. Binds to microtubules (MT) during cell division. Bundles polymerized MT via the formation of 25-nm crossbridges with centrally located endocytic MT, and midline phragmoplast MT. Expressed in all tissues enriched in dividing cells, such as the root and shoot apical meristem, foliar primordia, and young leaves, and embryos.

The protein localises to the nucleus. Its subcellular location is the cytoplasm. It localises to the cytoskeleton. The protein resides in the phragmoplast. In terms of biological role, microtubule-associated protein that plays a critical role in organizing the mitotic microtubule array during both early and late mitosis in all plant organs. Essential for the cytokinesis, especially in roots, by maintaining the integrity of the overlapped microtubules in the phragmoplast. Required during root morphogenesis. Needed for giant cell development during root knot nematode infection, where cytokinesis is initiated but not completed. This chain is 65-kDa microtubule-associated protein 3 (MAP65-3), found in Arabidopsis thaliana (Mouse-ear cress).